A 777-amino-acid polypeptide reads, in one-letter code: Semaphorin-3D (777 aa).

The N-terminal stretch at 1–37 (MNVTKDENPRSRSQDLHLFHAWMMLIMTVLFLPVTET) is a signal peptide. One can recognise a Sema domain in the interval 44-531 (RLKLTYKDLL…SWDGLVQLSL (488 aa)). Cysteines 117 and 128 form a disulfide. A glycan (N-linked (GlcNAc...) asparagine) is linked at N139. 4 disulfide bridges follow: C146–C155, C286–C398, C310–C358, and C534–C552. The region spanning 533 to 585 (RCDTYGKACADCCLARDPYCAWDGNACSRYAPTSKRRARRQDVKYGDPITQCW) is the PSI domain. In terms of domain architecture, Ig-like C2-type spans 592–680 (SHETADEKVI…TFIHTIVKLT (89 aa)). N-linked (GlcNAc...) asparagine glycosylation is found at N607 and N724. Cysteines 665 and 731 form a disulfide. Basic residues predominate over residues 740 to 765 (RRQRNKGSPKWKHMQEMKKKRNRRHH). The segment at 740–777 (RRQRNKGSPKWKHMQEMKKKRNRRHHRDLDELQRSVAT) is disordered. Basic and acidic residues predominate over residues 766–777 (RDLDELQRSVAT).

Belongs to the semaphorin family.

The protein localises to the secreted. Its function is as follows. Induces the collapse and paralysis of neuronal growth cones. Could potentially act as repulsive cues toward specific neuronal populations. Binds to neuropilin. The sequence is that of Semaphorin-3D (Sema3d) from Mus musculus (Mouse).